Reading from the N-terminus, the 633-residue chain is Glutamyl-tRNA(Gln) amidotransferase subunit E (633 aa).

This sequence belongs to the GatB/GatE family. GatE subfamily. As to quaternary structure, heterodimer of GatD and GatE.

The catalysed reaction is L-glutamyl-tRNA(Gln) + L-glutamine + ATP + H2O = L-glutaminyl-tRNA(Gln) + L-glutamate + ADP + phosphate + H(+). In terms of biological role, allows the formation of correctly charged Gln-tRNA(Gln) through the transamidation of misacylated Glu-tRNA(Gln) in organisms which lack glutaminyl-tRNA synthetase. The reaction takes place in the presence of glutamine and ATP through an activated gamma-phospho-Glu-tRNA(Gln). The GatDE system is specific for glutamate and does not act on aspartate. This is Glutamyl-tRNA(Gln) amidotransferase subunit E from Saccharolobus islandicus (strain L.S.2.15 / Lassen #1) (Sulfolobus islandicus).